The primary structure comprises 510 residues: Thermostable carboxypeptidase 1 (510 aa).

Residues 3 to 506 (PEAAYQNLLE…FLAYLEKKYA (504 aa)) form the Peptidase M32 domain. An HPF motif is present at residues 245–247 (HPF). The DXRXT signature appears at 255–259 (DVRIT). Histidine 276 provides a ligand contact to Zn(2+). The HEXXH signature appears at 276–280 (HEMGH). Residue glutamate 277 is the Proton donor/acceptor of the active site. Zn(2+) is bound by residues histidine 280 and glutamate 306. The HES/GQ signature appears at 305–308 (HESQ). Positions 357 to 362 (IRVEAD) match the I/NRXXA/SD motif. Residues 412–419 (GVMQDVHW) carry the GXXQDXHW motif.

It belongs to the peptidase M32 family. Homodimer. Requires Zn(2+) as cofactor.

It carries out the reaction Release of a C-terminal amino acid with broad specificity, except for -Pro.. In terms of biological role, broad specificity carboxypetidase that releases amino acids sequentially from the C-terminus, including neutral, aromatic, polar and basic residues, but not Pro. Has lower activity with substrates ending with Gly or Glu. The chain is Thermostable carboxypeptidase 1 from Thermus thermophilus (strain ATCC 27634 / DSM 579 / HB8).